Reading from the N-terminus, the 169-residue chain is uncharacterized protein (169 aa).

The residue at position 165 (S165) is a Phosphoserine.

This is an uncharacterized protein from Drosophila melanogaster (Fruit fly).